Here is a 260-residue protein sequence, read N- to C-terminus: MAVAPTAREENVYMAKLAEQAERYEEMVEFMEKVSNSLGSEELTVEERNLLSVAYKNVIGARRASWRIISSIEQKEESRGNEEHVNSIREYRSKIENELSKICDGILKLLDAKLIPSAASGDSKVFYLKMKGDYHRYLAEFKTGAERKEAAESTLTAYKAAQDIATTELAPTHPIRLGLALNFSVFYYEILNSPDRACNLAKQAFDEAIAELDTLGEESYKDSTLIMQLLRDNLTLWTSDMQDDGADEIKEDPKPDEAKN.

The protein belongs to the 14-3-3 family.

The chain is 14-3-3-like protein C from Nicotiana tabacum (Common tobacco).